Consider the following 372-residue polypeptide: Queuine tRNA-ribosyltransferase (372 aa).

Catalysis depends on D92, which acts as the Proton acceptor. Residues 92 to 96 (DSGGY), D146, Q188, and G215 each bind substrate. The segment at 246–252 (GIGSLRE) is RNA binding. The active-site Nucleophile is D265. Residues 270-274 (TRLGR) are RNA binding; important for wobble base 34 recognition. C303, C305, C308, and H334 together coordinate Zn(2+).

It belongs to the queuine tRNA-ribosyltransferase family. As to quaternary structure, homodimer. Within each dimer, one monomer is responsible for RNA recognition and catalysis, while the other monomer binds to the replacement base PreQ1. It depends on Zn(2+) as a cofactor.

It carries out the reaction 7-aminomethyl-7-carbaguanine + guanosine(34) in tRNA = 7-aminomethyl-7-carbaguanosine(34) in tRNA + guanine. It functions in the pathway tRNA modification; tRNA-queuosine biosynthesis. Functionally, catalyzes the base-exchange of a guanine (G) residue with the queuine precursor 7-aminomethyl-7-deazaguanine (PreQ1) at position 34 (anticodon wobble position) in tRNAs with GU(N) anticodons (tRNA-Asp, -Asn, -His and -Tyr). Catalysis occurs through a double-displacement mechanism. The nucleophile active site attacks the C1' of nucleotide 34 to detach the guanine base from the RNA, forming a covalent enzyme-RNA intermediate. The proton acceptor active site deprotonates the incoming PreQ1, allowing a nucleophilic attack on the C1' of the ribose to form the product. After dissociation, two additional enzymatic reactions on the tRNA convert PreQ1 to queuine (Q), resulting in the hypermodified nucleoside queuosine (7-(((4,5-cis-dihydroxy-2-cyclopenten-1-yl)amino)methyl)-7-deazaguanosine). The protein is Queuine tRNA-ribosyltransferase of Prochlorococcus marinus (strain MIT 9312).